The following is a 129-amino-acid chain: Small ribosomal subunit protein uS11 (129 aa).

It belongs to the universal ribosomal protein uS11 family. As to quaternary structure, part of the 30S ribosomal subunit. Interacts with proteins S7 and S18. Binds to IF-3.

Functionally, located on the platform of the 30S subunit, it bridges several disparate RNA helices of the 16S rRNA. Forms part of the Shine-Dalgarno cleft in the 70S ribosome. This is Small ribosomal subunit protein uS11 from Hydrogenovibrio crunogenus (strain DSM 25203 / XCL-2) (Thiomicrospira crunogena).